The sequence spans 587 residues: Sorting nexin 2A (587 aa).

Disordered regions lie at residues 1-78 (MMGS…DSDP) and 115-151 (SPFD…SSSD). Composition is skewed to polar residues over residues 42–59 (NGDT…TLSN) and 123–134 (SEINGTEDNSLH). Low complexity predominate over residues 135-150 (SQFSDSLSRSPSSSSS). Residue serine 144 is modified to Phosphoserine. Residues 157-277 (VSNPQKEQEI…KVFLQVQGKL (121 aa)) enclose the PX domain. Arginine 201, lysine 227, and arginine 244 together coordinate a 1,2-diacyl-sn-glycero-3-phospho-(1D-myo-inositol-3-phosphate). The region spanning 331 to 586 (LRQSVSNDWG…TSQYDREKQS (256 aa)) is the BAR domain.

This sequence belongs to the sorting nexin family. In terms of assembly, homodimer. Heterodimer with SNX1 or SNX2A. Component of the retromer complex which consists of VPS29 (MAG1), VPS26 (VPS26A or VPS26B), VPS35 (VPS35A or VPS35B or VPS35C), VPS5/17 (SNX1 or SNX2A or SNX2B). In terms of tissue distribution, ubiquitously expressed but at a lower level in flowers, siliques, and senescing leaves.

The protein resides in the cytoplasm. It localises to the endosome membrane. The protein localises to the prevacuolar compartment membrane. Its subcellular location is the golgi apparatus. It is found in the trans-Golgi network membrane. In terms of biological role, plays a role in vesicular protein sorting. Acts at the crossroads between the secretory and endocytic pathways. Is involved in the endosome to vacuole protein transport and, as component of the membrane-associated retromer complex, is also involved in endosome-to-Golgi retrograde transport. Also involved in the efficient sorting of seed storage protein globulin 12S. This chain is Sorting nexin 2A (SNX2A), found in Arabidopsis thaliana (Mouse-ear cress).